Here is a 452-residue protein sequence, read N- to C-terminus: tRNA modification GTPase MnmE (452 aa).

3 residues coordinate (6S)-5-formyl-5,6,7,8-tetrahydrofolate: Arg21, Glu78, and Lys118. A TrmE-type G domain is found at 214–375; the sequence is GMKVVIAGRP…LREHLKQSMG (162 aa). Asn224 is a K(+) binding site. Residues 224–229, 243–249, 268–271, and 333–336 contribute to the GTP site; these read NAGKSS, TDIAGTT, DTAG, and NKAD. Ser228 contributes to the Mg(2+) binding site. Residues Thr243, Ile245, and Thr248 each contribute to the K(+) site. Thr249 serves as a coordination point for Mg(2+). Residue Lys452 coordinates (6S)-5-formyl-5,6,7,8-tetrahydrofolate.

Belongs to the TRAFAC class TrmE-Era-EngA-EngB-Septin-like GTPase superfamily. TrmE GTPase family. Homodimer. Heterotetramer of two MnmE and two MnmG subunits. K(+) serves as cofactor.

It is found in the cytoplasm. Exhibits a very high intrinsic GTPase hydrolysis rate. Involved in the addition of a carboxymethylaminomethyl (cmnm) group at the wobble position (U34) of certain tRNAs, forming tRNA-cmnm(5)s(2)U34. This chain is tRNA modification GTPase MnmE, found in Pasteurella multocida (strain Pm70).